The sequence spans 276 residues: Rhamnulose-1-phosphate aldolase (276 aa).

Glu117 is an active-site residue. Residues His141, His143, and His212 each contribute to the Zn(2+) site.

It belongs to the aldolase class II family. RhaD subfamily. In terms of assembly, homotetramer. Zn(2+) serves as cofactor.

It localises to the cytoplasm. The catalysed reaction is L-rhamnulose 1-phosphate = (S)-lactaldehyde + dihydroxyacetone phosphate. The protein operates within carbohydrate degradation; L-rhamnose degradation; glycerone phosphate from L-rhamnose: step 3/3. Catalyzes the reversible cleavage of L-rhamnulose-1-phosphate to dihydroxyacetone phosphate (DHAP) and L-lactaldehyde. This is Rhamnulose-1-phosphate aldolase from Klebsiella pneumoniae subsp. pneumoniae (strain ATCC 700721 / MGH 78578).